A 256-amino-acid polypeptide reads, in one-letter code: Transcription factor bHLH131 (256 aa).

Residues 91 to 140 form the bHLH domain; sequence VAAKKHSDAERRRRLRINSQFATLRTILPNLVKQDKASVLGETVRYFNEL.

As to quaternary structure, homodimer.

The protein resides in the nucleus. The sequence is that of Transcription factor bHLH131 (BHLH131) from Arabidopsis thaliana (Mouse-ear cress).